The sequence spans 170 residues: Ribosome maturation factor RimM (170 aa).

The PRC barrel domain occupies 97–170 (HPDEYYWVDL…RIVVDWDPEF (74 aa)).

The protein belongs to the RimM family. As to quaternary structure, binds ribosomal protein uS19.

Its subcellular location is the cytoplasm. Functionally, an accessory protein needed during the final step in the assembly of 30S ribosomal subunit, possibly for assembly of the head region. Essential for efficient processing of 16S rRNA. May be needed both before and after RbfA during the maturation of 16S rRNA. It has affinity for free ribosomal 30S subunits but not for 70S ribosomes. The protein is Ribosome maturation factor RimM of Xylella fastidiosa (strain M23).